Here is a 96-residue protein sequence, read N- to C-terminus: Aspartyl/glutamyl-tRNA(Asn/Gln) amidotransferase subunit C (96 aa).

It belongs to the GatC family. Heterotrimer of A, B and C subunits.

It carries out the reaction L-glutamyl-tRNA(Gln) + L-glutamine + ATP + H2O = L-glutaminyl-tRNA(Gln) + L-glutamate + ADP + phosphate + H(+). The catalysed reaction is L-aspartyl-tRNA(Asn) + L-glutamine + ATP + H2O = L-asparaginyl-tRNA(Asn) + L-glutamate + ADP + phosphate + 2 H(+). Functionally, allows the formation of correctly charged Asn-tRNA(Asn) or Gln-tRNA(Gln) through the transamidation of misacylated Asp-tRNA(Asn) or Glu-tRNA(Gln) in organisms which lack either or both of asparaginyl-tRNA or glutaminyl-tRNA synthetases. The reaction takes place in the presence of glutamine and ATP through an activated phospho-Asp-tRNA(Asn) or phospho-Glu-tRNA(Gln). This Bacillus licheniformis (strain ATCC 14580 / DSM 13 / JCM 2505 / CCUG 7422 / NBRC 12200 / NCIMB 9375 / NCTC 10341 / NRRL NRS-1264 / Gibson 46) protein is Aspartyl/glutamyl-tRNA(Asn/Gln) amidotransferase subunit C.